Here is a 196-residue protein sequence, read N- to C-terminus: GTP cyclohydrolase-2 (196 aa).

R49–E53 is a binding site for GTP. Residues C54, C65, and C67 each coordinate Zn(2+). Residues Q70, E92 to R94, and T114 each bind GTP. D126 serves as the catalytic Proton acceptor. Residue R128 is the Nucleophile of the active site. The GTP site is built by T149 and K154.

The protein belongs to the GTP cyclohydrolase II family. Homodimer. Zn(2+) is required as a cofactor.

It carries out the reaction GTP + 4 H2O = 2,5-diamino-6-hydroxy-4-(5-phosphoribosylamino)-pyrimidine + formate + 2 phosphate + 3 H(+). Its pathway is cofactor biosynthesis; riboflavin biosynthesis; 5-amino-6-(D-ribitylamino)uracil from GTP: step 1/4. Functionally, catalyzes the conversion of GTP to 2,5-diamino-6-ribosylamino-4(3H)-pyrimidinone 5'-phosphate (DARP), formate and pyrophosphate. This chain is GTP cyclohydrolase-2, found in Shigella dysenteriae serotype 1 (strain Sd197).